The following is a 313-amino-acid chain: tRNA dimethylallyltransferase (313 aa).

ATP is bound at residue 17–24 (GPTASGKT). A substrate-binding site is contributed by 19-24 (TASGKT). 3 interaction with substrate tRNA regions span residues 42 to 45 (DSAL), 166 to 170 (QRLSR), and 247 to 252 (RCVGYR).

The protein belongs to the IPP transferase family. In terms of assembly, monomer. It depends on Mg(2+) as a cofactor.

It carries out the reaction adenosine(37) in tRNA + dimethylallyl diphosphate = N(6)-dimethylallyladenosine(37) in tRNA + diphosphate. Catalyzes the transfer of a dimethylallyl group onto the adenine at position 37 in tRNAs that read codons beginning with uridine, leading to the formation of N6-(dimethylallyl)adenosine (i(6)A). The polypeptide is tRNA dimethylallyltransferase (Pectobacterium atrosepticum (strain SCRI 1043 / ATCC BAA-672) (Erwinia carotovora subsp. atroseptica)).